Reading from the N-terminus, the 145-residue chain is Leghemoglobin-1 (145 aa).

The region spanning 3–145 (AFSDKQEALV…ELAAAIKKAY (143 aa)) is the Globin domain. A nitrated tyrosine mark is found at Tyr26 and Tyr31. Residue Ser46 participates in heme b binding. Ser46 is modified (phosphoserine). His62 is a binding site for O2. Residues Lys65, His93, and Lys96 each contribute to the heme b site. Tyr134 is subject to Nitrated tyrosine.

This sequence belongs to the plant globin family. Monomer. In terms of processing, nitrated in effective nodules and particularly in hypoxic conditions; this mechanism may play a protective role in the symbiosis by buffering toxic peroxynitrite NO(2)(-). Nitration level decrease during nodule senescence. Post-translationally, phosphorylation at Ser-46 disrupts the molecular environment of its porphyrin ring oxygen binding pocket, thus leading to a reduced oxygen consumption and to the delivery of oxygen O(2) to symbiosomes. As to expression, root nodules.

It localises to the cytoplasm. It is found in the cytosol. The protein localises to the nucleus. In terms of biological role, leghemoglobin that reversibly binds oxygen O(2) through a pentacoordinated heme iron. In root nodules, facilitates the diffusion of oxygen to the bacteroids while preventing the bacterial nitrogenase from being inactivated by buffering dioxygen, nitric oxide and carbon monoxide, and promoting the formation of reactive oxygen species (ROS, e.g. H(2)O(2)). This role is essential for symbiotic nitrogen fixation (SNF). The sequence is that of Leghemoglobin-1 from Vigna unguiculata (Cowpea).